The sequence spans 67 residues: uncharacterized protein (67 aa).

This is an uncharacterized protein from Lymantria dispar multicapsid nuclear polyhedrosis virus (LdMNPV).